The sequence spans 345 residues: Phenylalanine--tRNA ligase alpha subunit (345 aa).

A Mg(2+)-binding site is contributed by Glu266.

This sequence belongs to the class-II aminoacyl-tRNA synthetase family. Phe-tRNA synthetase alpha subunit type 1 subfamily. Tetramer of two alpha and two beta subunits. Mg(2+) is required as a cofactor.

It localises to the cytoplasm. The enzyme catalyses tRNA(Phe) + L-phenylalanine + ATP = L-phenylalanyl-tRNA(Phe) + AMP + diphosphate + H(+). The protein is Phenylalanine--tRNA ligase alpha subunit of Methylibium petroleiphilum (strain ATCC BAA-1232 / LMG 22953 / PM1).